A 639-amino-acid polypeptide reads, in one-letter code: 2-oxoacid:ferredoxin oxidoreductase 1, subunit alpha (639 aa).

The YPITP motif signature appears at 266-270 (YPITP). Positions 269 and 352 each coordinate substrate.

Heterodimer composed of an alpha and a beta subunit.

The enzyme catalyses a 2-oxocarboxylate + 2 oxidized [2Fe-2S]-[ferredoxin] + CoA = an acyl-CoA + 2 reduced [2Fe-2S]-[ferredoxin] + CO2 + H(+). Catalyzes the coenzyme A-dependent oxidative decarboxylation of different 2-oxoacids such as pyruvate, 2-oxobutyrate and glyoxylate to form their CoA derivatives. In Aeropyrum pernix (strain ATCC 700893 / DSM 11879 / JCM 9820 / NBRC 100138 / K1), this protein is 2-oxoacid:ferredoxin oxidoreductase 1, subunit alpha.